Reading from the N-terminus, the 425-residue chain is Histidine--tRNA ligase 1 (425 aa).

It belongs to the class-II aminoacyl-tRNA synthetase family. Homodimer.

The protein resides in the cytoplasm. It carries out the reaction tRNA(His) + L-histidine + ATP = L-histidyl-tRNA(His) + AMP + diphosphate + H(+). This chain is Histidine--tRNA ligase 1, found in Bacillus cereus (strain ZK / E33L).